We begin with the raw amino-acid sequence, 218 residues long: MAPKFGYWKVKGLVQPTRLLLEHLEETYEERAYDRNEIDAWSNDKFKLGLEFPNLPYYIDGDFKLTQSMAIIRYIADKHNMLGACPKERAEISMLEGAVLDIRMGVLRIAYNKEYETLKVDFLNKLPGRLKMFEDRLSNKTYLNGNCVTHPDFMLYDALDVVLYMDSQCLNEFPKLVSFKKCIEDLPQIKNYLNSSRYIKWPLQGWDATFGGGDTPPK.

In terms of domain architecture, GST N-terminal spans 1-83; sequence MAPKFGYWKV…YIADKHNMLG (83 aa). Glutathione is bound by residues 7–8, 41–45, 54–55, and 67–68; these read YW, WSNDK, NL, and QS. In terms of domain architecture, GST C-terminal spans 85 to 203; sequence CPKERAEISM…NSSRYIKWPL (119 aa). Tyrosine 111 is a binding site for substrate.

The protein belongs to the GST superfamily. Mu family. As to quaternary structure, homodimer. In terms of tissue distribution, tegument and in subtegumentary parenchymal cells. GST 26 may be actively excreted by adult worms.

The enzyme catalyses RX + glutathione = an S-substituted glutathione + a halide anion + H(+). Its function is as follows. Conjugation of reduced glutathione to a wide number of exogenous and endogenous hydrophobic electrophiles. GST isoenzymes appear to play a central role in the parasite detoxification system. Other functions are also suspected including a role in increasing the solubility of haematin in the parasite gut. The protein is Glutathione S-transferase class-mu 26 kDa isozyme of Schistosoma mansoni (Blood fluke).